The sequence spans 267 residues: Small ribosomal subunit protein uS10m (267 aa).

The transit peptide at 1–10 directs the protein to the mitochondrion; that stretch reads MLSRILGVRN.

It belongs to the universal ribosomal protein uS10 family. In terms of assembly, part of the mitochondrial small ribosomal subunit.

The protein resides in the mitochondrion. Functionally, involved in mitochondrial genome encoded proteins translation. Involved in the binding of tRNA to the ribosomes. The protein is Small ribosomal subunit protein uS10m (RSM10) of Debaryomyces hansenii (strain ATCC 36239 / CBS 767 / BCRC 21394 / JCM 1990 / NBRC 0083 / IGC 2968) (Yeast).